Here is a 286-residue protein sequence, read N- to C-terminus: Rhomboid-type serine protease 2 (286 aa).

The next 6 helical transmembrane spans lie at 18 to 38, 66 to 86, 99 to 119, 122 to 142, 164 to 183, and 188 to 210; these read ITQY…LLVI, SFYL…VGLF, VFTG…FCIV, LLYP…FMSF, VSIP…MVLI, and FWGH…KFLY. Residue S133 is the Nucleophile of the active site. H191 is an active-site residue.

It belongs to the peptidase S54 family.

The protein localises to the golgi apparatus membrane. Its subcellular location is the golgi apparatus. It is found in the cis-Golgi network membrane. It carries out the reaction Cleaves type-1 transmembrane domains using a catalytic dyad composed of serine and histidine that are contributed by different transmembrane domains.. Functionally, probable rhomboid-type serine protease that catalyzes intramembrane proteolysis. This chain is Rhomboid-type serine protease 2 (RBD2), found in Debaryomyces hansenii (strain ATCC 36239 / CBS 767 / BCRC 21394 / JCM 1990 / NBRC 0083 / IGC 2968) (Yeast).